Here is a 425-residue protein sequence, read N- to C-terminus: Glutamyl-tRNA reductase (425 aa).

Substrate contacts are provided by residues 49-52 (TCNR), S109, 114-116 (EGQ), and Q120. C50 serves as the catalytic Nucleophile. 189–194 (GAGETG) serves as a coordination point for NADP(+).

Belongs to the glutamyl-tRNA reductase family. In terms of assembly, homodimer.

The catalysed reaction is (S)-4-amino-5-oxopentanoate + tRNA(Glu) + NADP(+) = L-glutamyl-tRNA(Glu) + NADPH + H(+). It participates in porphyrin-containing compound metabolism; protoporphyrin-IX biosynthesis; 5-aminolevulinate from L-glutamyl-tRNA(Glu): step 1/2. The protein operates within porphyrin-containing compound metabolism; chlorophyll biosynthesis. In terms of biological role, catalyzes the NADPH-dependent reduction of glutamyl-tRNA(Glu) to glutamate 1-semialdehyde (GSA). In Chlorobium luteolum (strain DSM 273 / BCRC 81028 / 2530) (Pelodictyon luteolum), this protein is Glutamyl-tRNA reductase.